We begin with the raw amino-acid sequence, 302 residues long: Putative S-adenosyl-L-methionine-dependent methyltransferase MAB_4586c (302 aa).

Residues aspartate 122 and 151 to 152 contribute to the S-adenosyl-L-methionine site; that span reads DL.

It belongs to the UPF0677 family.

Functionally, exhibits S-adenosyl-L-methionine-dependent methyltransferase activity. The polypeptide is Putative S-adenosyl-L-methionine-dependent methyltransferase MAB_4586c (Mycobacteroides abscessus (strain ATCC 19977 / DSM 44196 / CCUG 20993 / CIP 104536 / JCM 13569 / NCTC 13031 / TMC 1543 / L948) (Mycobacterium abscessus)).